The sequence spans 194 residues: Troponin I 4 (194 aa).

Residues 1-27 (MSDVDADEARKMAERERKKEEVRKRLE) form a disordered region. Over residues 7–27 (DEARKMAERERKKEEVRKRLE) the composition is skewed to basic and acidic residues.

The protein belongs to the troponin I family. Expression is detected only in pharyngeal muscle cells from embryos to adults.

Functionally, troponin I is the inhibitory subunit of troponin, the thin filament regulatory complex which confers calcium-sensitivity to muscle actomyosin ATPase activity. The protein is Troponin I 4 (tni-4) of Caenorhabditis elegans.